A 177-amino-acid chain; its full sequence is ATP synthase subunit delta (177 aa).

The protein belongs to the ATPase delta chain family. F-type ATPases have 2 components, F(1) - the catalytic core - and F(0) - the membrane proton channel. F(1) has five subunits: alpha(3), beta(3), gamma(1), delta(1), epsilon(1). F(0) has three main subunits: a(1), b(2) and c(10-14). The alpha and beta chains form an alternating ring which encloses part of the gamma chain. F(1) is attached to F(0) by a central stalk formed by the gamma and epsilon chains, while a peripheral stalk is formed by the delta and b chains.

Its subcellular location is the cell inner membrane. Functionally, f(1)F(0) ATP synthase produces ATP from ADP in the presence of a proton or sodium gradient. F-type ATPases consist of two structural domains, F(1) containing the extramembraneous catalytic core and F(0) containing the membrane proton channel, linked together by a central stalk and a peripheral stalk. During catalysis, ATP synthesis in the catalytic domain of F(1) is coupled via a rotary mechanism of the central stalk subunits to proton translocation. In terms of biological role, this protein is part of the stalk that links CF(0) to CF(1). It either transmits conformational changes from CF(0) to CF(1) or is implicated in proton conduction. This is ATP synthase subunit delta from Sulfurimonas denitrificans (strain ATCC 33889 / DSM 1251) (Thiomicrospira denitrificans (strain ATCC 33889 / DSM 1251)).